The following is a 402-amino-acid chain: CCA-adding enzyme (402 aa).

2 residues coordinate ATP: glycine 32 and arginine 35. CTP-binding residues include glycine 32 and arginine 35. Residues aspartate 45 and aspartate 47 each contribute to the Mg(2+) site. Positions 116, 159, 162, 165, and 168 each coordinate ATP. Residues arginine 116, aspartate 159, arginine 162, arginine 165, and arginine 168 each contribute to the CTP site.

It belongs to the tRNA nucleotidyltransferase/poly(A) polymerase family. Bacterial CCA-adding enzyme type 3 subfamily. As to quaternary structure, homodimer. Mg(2+) is required as a cofactor.

It carries out the reaction a tRNA precursor + 2 CTP + ATP = a tRNA with a 3' CCA end + 3 diphosphate. It catalyses the reaction a tRNA with a 3' CCA end + 2 CTP + ATP = a tRNA with a 3' CCACCA end + 3 diphosphate. Catalyzes the addition and repair of the essential 3'-terminal CCA sequence in tRNAs without using a nucleic acid template. Adds these three nucleotides in the order of C, C, and A to the tRNA nucleotide-73, using CTP and ATP as substrates and producing inorganic pyrophosphate. tRNA 3'-terminal CCA addition is required both for tRNA processing and repair. Also involved in tRNA surveillance by mediating tandem CCA addition to generate a CCACCA at the 3' terminus of unstable tRNAs. While stable tRNAs receive only 3'-terminal CCA, unstable tRNAs are marked with CCACCA and rapidly degraded. The sequence is that of CCA-adding enzyme from Streptococcus pyogenes serotype M3 (strain ATCC BAA-595 / MGAS315).